Consider the following 208-residue polypeptide: Large ribosomal subunit protein uL4 (208 aa).

It belongs to the universal ribosomal protein uL4 family. Part of the 50S ribosomal subunit.

In terms of biological role, one of the primary rRNA binding proteins, this protein initially binds near the 5'-end of the 23S rRNA. It is important during the early stages of 50S assembly. It makes multiple contacts with different domains of the 23S rRNA in the assembled 50S subunit and ribosome. Functionally, forms part of the polypeptide exit tunnel. In Anaplasma marginale (strain Florida), this protein is Large ribosomal subunit protein uL4.